The following is a 253-amino-acid chain: Phosphate import ATP-binding protein PstB (253 aa).

The ABC transporter domain occupies 7–248; that stretch reads IEVEDLNVYF…PRDKRTEDYI (242 aa). 39–46 is a binding site for ATP; the sequence is GPSGCGKS.

Belongs to the ABC transporter superfamily. Phosphate importer (TC 3.A.1.7) family. As to quaternary structure, the complex is composed of two ATP-binding proteins (PstB), two transmembrane proteins (PstC and PstA) and a solute-binding protein (PstS).

It is found in the cell membrane. It catalyses the reaction phosphate(out) + ATP + H2O = ADP + 2 phosphate(in) + H(+). Part of the ABC transporter complex PstSACB involved in phosphate import. Responsible for energy coupling to the transport system. This Methanothermobacter thermautotrophicus (strain ATCC 29096 / DSM 1053 / JCM 10044 / NBRC 100330 / Delta H) (Methanobacterium thermoautotrophicum) protein is Phosphate import ATP-binding protein PstB.